Here is a 377-residue protein sequence, read N- to C-terminus: Beta-lactamase (377 aa).

Residues 1–19 (MFKTTLCALLITASCSTFA) form the signal peptide. S80 acts as the Acyl-ester intermediate in catalysis. Residues S80, Q136, Y166, N168, A334, and N359 each coordinate a beta-lactam.

The protein belongs to the class-C beta-lactamase family. Monomer.

Its subcellular location is the periplasm. It carries out the reaction a beta-lactam + H2O = a substituted beta-amino acid. With respect to regulation, inhibited by the beta-lactamase-blocking agents avibactam, enmetazobactam, relebactam, nacubactam, vaborbactam, taniborbactam, zidebactam, and beta-lactam-analog boronic acids, via a covalent binding to Ser-80. Inhibited by non-beta-lactam, benzo(b)thiophene-2-boronic acid (BZBTH2B) and various cyclic boronates. Not inhibited by clavulanic acid. Inhibited by O-aryloxycarbonyl hydroxamates, via cross-linking of the active site Ser-80 to Lys-331. Weakly inhibited by citric acid. Functionally, class C beta-lactamase which confers resistance to penicillins and cephalosporins. Has benzylpenicillin- and cephaloridine-hydrolyzing activity. Has weak cefuroxime, cefotaxime, cefoxitin and oxacillin-hydrolyzing activities. The chain is Beta-lactamase from Escherichia coli (strain K12).